A 336-amino-acid chain; its full sequence is Cytoplasmic envelopment protein 2 (336 aa).

Residues 67–69 (KKK) are interaction with host BBLF1.

This sequence belongs to the herpesviridae cytoplasmic envelopment protein 2 family. In terms of assembly, homodimer. Interacts with BBLF1. Interacts with the capsid. Interacts with BKRF4 (via C-terminus); this interaction is important for infectious virion production. Interacts with host TYK2; this interaction participates to the inhibition of host type I IFN signaling. Interacts with host STAT1; this interaction leads to STAT1 dephosphorylation and inhibition. Interacts with host STAT2; this interaction leads to STAT2 degradation. Interacts with host CUL1; this interaction might facilitate CUL1 recruitment to STAT2, leading to ubiquitination and degradation of the latter. Interacts with host AGO2; this interaction participates to the host miRNA regulation leading to enhanced SUMOylation.

Its subcellular location is the virion tegument. It localises to the host cytoplasm. The protein resides in the host nucleus. The protein localises to the host Golgi apparatus. It is found in the host trans-Golgi network. In terms of biological role, plays a critical role in cytoplasmic virus egress. Participates in the final step of tegumentation and envelope acquisition within the host cytoplasm by directly interacting with the capsid. Upon virion binding to target cell, a signaling cascade is triggered to disrupt the interaction with the capsid, thereby preparing capsid uncoating. Activates the AP-1 pathway and enhances EBV reactivation and virus release. Inhibits type I IFN-induced TYK2, STAT1 and STAT3 phosphorylation, thereby impairing type I IFN signaling and counteracting the ability of IFN-alpha to suppress the reactivation of EBV. Recruits SHP1 phosphatase to dephosphorylate STAT1. Mediates STAT2 ubiquitination and proteasomal degradation. Also suppresses type II and type III IFN signaling. Contributes to G1/S arrest in the host cell. Acts as an miRNA regulator that interferes with the function of RISC in miRNA-mediated mRNA silencing. As a result, SUMOylation is increased. When encapsulated in the exosomes released by EBV-infected host cells, may facilitate the infection in recipient cells. This is Cytoplasmic envelopment protein 2 from Epstein-Barr virus (strain AG876) (HHV-4).